Here is a 96-residue protein sequence, read N- to C-terminus: Co-chaperonin GroES (96 aa).

The protein belongs to the GroES chaperonin family. Heptamer of 7 subunits arranged in a ring. Interacts with the chaperonin GroEL.

The protein localises to the cytoplasm. Functionally, together with the chaperonin GroEL, plays an essential role in assisting protein folding. The GroEL-GroES system forms a nano-cage that allows encapsulation of the non-native substrate proteins and provides a physical environment optimized to promote and accelerate protein folding. GroES binds to the apical surface of the GroEL ring, thereby capping the opening of the GroEL channel. The sequence is that of Co-chaperonin GroES from Vibrio campbellii (strain ATCC BAA-1116).